Reading from the N-terminus, the 65-residue chain is Large ribosomal subunit protein uL30 (65 aa).

This sequence belongs to the universal ribosomal protein uL30 family. As to quaternary structure, part of the 50S ribosomal subunit.

This chain is Large ribosomal subunit protein uL30, found in Rickettsia bellii (strain OSU 85-389).